The sequence spans 357 residues: Intracellular hyaluronan-binding protein 4 (357 aa).

Disordered regions lie at residues 56–116, 150–186, and 313–357; these read VVAR…HKTA, ERPRGCGRGRGGMQGRGRGGGINKSFDGFDQRGKREF, and PGCG…PALT. Basic and acidic residues predominate over residues 96 to 115; sequence PKQEECGGKDNSRAEKEHKT. A compositionally biased stretch (gly residues) spans 155 to 171; the sequence is CGRGRGGMQGRGRGGGI. The segment covering 176–186 has biased composition (basic and acidic residues); that stretch reads DGFDQRGKREF. Positions 348–357 are enriched in acidic residues; that stretch reads DDPEDFPALT.

Belongs to the SERBP1-HABP4 family. As to quaternary structure, associates with ribosomes; promoting ribosome stabilization. Interacts with EEF2/eEF2; promoting ribosome stabilization.

The protein localises to the nucleus. The protein resides in the cytoplasm. It localises to the stress granule. It is found in the sarcoplasm. Its subcellular location is the nuclear body. The protein localises to the nucleolus. The protein resides in the nucleus speckle. It localises to the cajal body. It is found in the gem. In terms of biological role, ribosome-binding protein that promotes ribosome hibernation, a process during which ribosomes are stabilized in an inactive state and preserved from proteasomal degradation. Acts via its association with EEF2/eEF2 factor at the A-site of the ribosome, promoting ribosome stabilization in an inactive state compatible with storage. Plays a key role in ribosome hibernation in the mature egg by promoting ribosome stabilization. Ribosomes, which are produced in large quantities during oogenesis, are stored and translationally repressed in the egg and early embryo. In Gallus gallus (Chicken), this protein is Intracellular hyaluronan-binding protein 4.